We begin with the raw amino-acid sequence, 331 residues long: tRNA-cytidine(32) 2-sulfurtransferase (331 aa).

The PP-loop motif motif lies at Ser-71–Ser-76. Cys-146, Cys-149, and Cys-237 together coordinate [4Fe-4S] cluster.

Belongs to the TtcA family. As to quaternary structure, homodimer. Mg(2+) serves as cofactor. The cofactor is [4Fe-4S] cluster.

The protein localises to the cytoplasm. It catalyses the reaction cytidine(32) in tRNA + S-sulfanyl-L-cysteinyl-[cysteine desulfurase] + AH2 + ATP = 2-thiocytidine(32) in tRNA + L-cysteinyl-[cysteine desulfurase] + A + AMP + diphosphate + H(+). Its pathway is tRNA modification. Catalyzes the ATP-dependent 2-thiolation of cytidine in position 32 of tRNA, to form 2-thiocytidine (s(2)C32). The sulfur atoms are provided by the cysteine/cysteine desulfurase (IscS) system. The sequence is that of tRNA-cytidine(32) 2-sulfurtransferase from Burkholderia multivorans (strain ATCC 17616 / 249).